The following is a 247-amino-acid chain: Protein GrpE (247 aa).

Residues Gln31–Val49 are compositionally biased toward basic and acidic residues. A disordered region spans residues Gln31 to His79. The span at Lys50 to Lys68 shows a compositional bias: low complexity.

This sequence belongs to the GrpE family. As to quaternary structure, homodimer.

Its subcellular location is the cytoplasm. Its function is as follows. Participates actively in the response to hyperosmotic and heat shock by preventing the aggregation of stress-denatured proteins, in association with DnaK and GrpE. It is the nucleotide exchange factor for DnaK and may function as a thermosensor. Unfolded proteins bind initially to DnaJ; upon interaction with the DnaJ-bound protein, DnaK hydrolyzes its bound ATP, resulting in the formation of a stable complex. GrpE releases ADP from DnaK; ATP binding to DnaK triggers the release of the substrate protein, thus completing the reaction cycle. Several rounds of ATP-dependent interactions between DnaJ, DnaK and GrpE are required for fully efficient folding. The protein is Protein GrpE of Onion yellows phytoplasma (strain OY-M).